Here is a 632-residue protein sequence, read N- to C-terminus: Probable electron transfer flavoprotein-ubiquinone oxidoreductase, mitochondrial (632 aa).

93-107 contacts FAD; it reads VCIVGAGPAGLSAAI. [4Fe-4S] cluster contacts are provided by C575, C601, C604, and C607. In terms of domain architecture, 4Fe-4S ferredoxin-type spans 592–621; it reads KRFVINSQNCVHCKTCDIKDPLQGIQWKTP.

This sequence belongs to the ETF-QO/FixC family. The cofactor is [4Fe-4S] cluster. FAD serves as cofactor.

It is found in the mitochondrion inner membrane. The catalysed reaction is a ubiquinone + reduced [electron-transfer flavoprotein] = a ubiquinol + oxidized [electron-transfer flavoprotein] + H(+). In terms of biological role, accepts electrons from ETF and reduces ubiquinone. The sequence is that of Probable electron transfer flavoprotein-ubiquinone oxidoreductase, mitochondrial from Schizosaccharomyces pombe (strain 972 / ATCC 24843) (Fission yeast).